The primary structure comprises 67 residues: uncharacterized protein (67 aa).

This is an uncharacterized protein from Acidianus filamentous virus 2 (isolate Italy/Pozzuoli) (AFV-2).